Consider the following 389-residue polypeptide: Probable tRNA pseudouridine synthase D 1 (389 aa).

D63 (nucleophile) is an active-site residue. The region spanning 135–345 (GAPNYYDDQR…KYTKRPIISI (211 aa)) is the TRUD domain.

It belongs to the pseudouridine synthase TruD family.

The catalysed reaction is uridine(13) in tRNA = pseudouridine(13) in tRNA. Functionally, could be responsible for synthesis of pseudouridine from uracil-13 in transfer RNAs. The polypeptide is Probable tRNA pseudouridine synthase D 1 (truD1) (Methanococcus maripaludis (strain DSM 14266 / JCM 13030 / NBRC 101832 / S2 / LL)).